A 410-amino-acid chain; its full sequence is Translation initiation factor 2 subunit gamma (410 aa).

Residues glutamine 6–glutamate 203 form the tr-type G domain. The tract at residues glycine 15–threonine 22 is G1. Residues aspartate 18, threonine 22, glycine 43, and serine 45 each contribute to the Mg(2+) site. Position 18–23 (aspartate 18–serine 23) interacts with GTP. The segment at glycine 43–arginine 47 is G2. Residues cysteine 58, cysteine 61, cysteine 73, and cysteine 76 each contribute to the Zn(2+) site. The segment at aspartate 90–glycine 93 is G3. GTP contacts are provided by residues asparagine 146 to aspartate 149 and serine 181 to histidine 183. Residues asparagine 146–aspartate 149 are G4. The G5 stretch occupies residues serine 181–histidine 183.

Belongs to the TRAFAC class translation factor GTPase superfamily. Classic translation factor GTPase family. EIF2G subfamily. Heterotrimer composed of an alpha, a beta and a gamma chain. Mg(2+) is required as a cofactor.

It catalyses the reaction GTP + H2O = GDP + phosphate + H(+). Its function is as follows. eIF-2 functions in the early steps of protein synthesis by forming a ternary complex with GTP and initiator tRNA. This Methanococcus maripaludis (strain C7 / ATCC BAA-1331) protein is Translation initiation factor 2 subunit gamma.